Reading from the N-terminus, the 587-residue chain is MSVSAAARHLESLLPRLASLRHYLQFHARLLTSGHLGAHPGLRARFLDRLALSPHPAALPHALLLLRSLPTPATNDLNAALRGLAASPHPARSLLLLAGRLLPALLPRPDALSLSFALKASARCSDAHTTVQLHALVLRLGVAADVRLLTTLLDSYAKCGDLASARKVFDEMTVRDVATWNSLLAGLAQGTEPNLALALFHRLANSFQELPSREEPNEVTIVAALSACAQIGLLKDGMYVHEFAKRFGLDRNVRVCNSLIDMYSKCGSLSRALDVFHSIKPEDQTLVSYNAAIQAHSMHGHGGDALRLFDEMPTRIEPDGVTYLAVLCGCNHSGLVDDGLRVFNSMRVAPNMKHYGTIVDLLGRAGRLTEAYDTVISMPFPADIVLWQTLLGAAKMHGVVELAELAANKLAELGSNVDGDYVLLSNVYASKARWMDVGRVRDTMRSNDVRKVPGFSYTEIDGVMHKFINGDKEHPRWQEIYRALEDIVSRISELGYEPETSNVLHDIGEEEKQYALCYHSEKLAIAFGLIATPPGETLRVIKNLRICGDCHVVAKLISKAYGRVIVIRDRARFHRFEDGQCSCRDYW.

A mitochondrion-targeting transit peptide spans 1–30 (MSVSAAARHLESLLPRLASLRHYLQFHARL). PPR repeat units follow at residues 145-179 (DVRL…DVAT), 200-203 (FHRL), 217-251 (NEVT…GLDR), 252-286 (NVRV…DQTL), 287-315 (VSYN…MPTR), 319-349 (DGVT…MRVA), 351-381 (NMKH…MPFP), and 383-417 (DIVL…GSNV). A type E motif region spans residues 386–461 (LWQTLLGAAK…VPGFSYTEID (76 aa)). Positions 462–492 (GVMHKFINGDKEHPRWQEIYRALEDIVSRIS) are type E(+) motif. The interval 493–587 (ELGYEPETSN…DGQCSCRDYW (95 aa)) is type DYW motif.

The protein resides in the mitochondrion. Functionally, involved in multiple sites RNA editing events in mitochondria. Essential for C-to-U RNA editing at seven specific sites of nad2, nad4, cox2, cox3 and ccmC transcripts, all coding for proteins involved in the mitochondrial electron transport chain coupled to ATP generation. Required for normal growth and development. The protein is Pentatricopeptide repeat-containing protein OGR1, mitochondrial of Oryza sativa subsp. japonica (Rice).